The sequence spans 264 residues: Undecaprenyl-diphosphatase 2 (264 aa).

The next 7 helical transmembrane spans lie at 29–49 (GSAF…SYFW), 77–97 (SWIV…SGVL), 107–127 (LTVI…AEIF), 137–157 (ASLA…IPGV), 180–200 (FSFL…LWEL), 212–232 (VLAT…WGLM), and 243–263 (FVIY…MGWL).

It belongs to the UppP family.

It is found in the cell inner membrane. The enzyme catalyses di-trans,octa-cis-undecaprenyl diphosphate + H2O = di-trans,octa-cis-undecaprenyl phosphate + phosphate + H(+). In terms of biological role, catalyzes the dephosphorylation of undecaprenyl diphosphate (UPP). Confers resistance to bacitracin. This is Undecaprenyl-diphosphatase 2 from Mesorhizobium japonicum (strain LMG 29417 / CECT 9101 / MAFF 303099) (Mesorhizobium loti (strain MAFF 303099)).